Here is a 505-residue protein sequence, read N- to C-terminus: Lysine--tRNA ligase, heat inducible (505 aa).

N6-acetyllysine occurs at positions 114 and 156. Glu415 and Glu422 together coordinate Mg(2+).

The protein belongs to the class-II aminoacyl-tRNA synthetase family. As to quaternary structure, homodimer. Mg(2+) serves as cofactor.

The protein resides in the cytoplasm. The enzyme catalyses tRNA(Lys) + L-lysine + ATP = L-lysyl-tRNA(Lys) + AMP + diphosphate. In Escherichia coli O6:H1 (strain CFT073 / ATCC 700928 / UPEC), this protein is Lysine--tRNA ligase, heat inducible (lysU).